The primary structure comprises 212 residues: Orotate phosphoribosyltransferase (212 aa).

Lys26 serves as a coordination point for 5-phospho-alpha-D-ribose 1-diphosphate. 34-35 serves as a coordination point for orotate; the sequence is FF. 5-phospho-alpha-D-ribose 1-diphosphate-binding positions include 72–73, Arg98, Lys99, Lys102, His104, and 123–131; these read YK and DDVISAGTS. 2 residues coordinate orotate: Ser127 and Arg155.

Belongs to the purine/pyrimidine phosphoribosyltransferase family. PyrE subfamily. In terms of assembly, homodimer. Mg(2+) is required as a cofactor.

The enzyme catalyses orotidine 5'-phosphate + diphosphate = orotate + 5-phospho-alpha-D-ribose 1-diphosphate. Its pathway is pyrimidine metabolism; UMP biosynthesis via de novo pathway; UMP from orotate: step 1/2. In terms of biological role, catalyzes the transfer of a ribosyl phosphate group from 5-phosphoribose 1-diphosphate to orotate, leading to the formation of orotidine monophosphate (OMP). The sequence is that of Orotate phosphoribosyltransferase from Thiobacillus denitrificans (strain ATCC 25259 / T1).